A 133-amino-acid polypeptide reads, in one-letter code: ATP synthase epsilon chain, chloroplastic (133 aa).

Belongs to the ATPase epsilon chain family. As to quaternary structure, F-type ATPases have 2 components, CF(1) - the catalytic core - and CF(0) - the membrane proton channel. CF(1) has five subunits: alpha(3), beta(3), gamma(1), delta(1), epsilon(1). CF(0) has three main subunits: a, b and c.

Its subcellular location is the plastid. The protein resides in the chloroplast thylakoid membrane. Its function is as follows. Produces ATP from ADP in the presence of a proton gradient across the membrane. This is ATP synthase epsilon chain, chloroplastic from Morus indica (Mulberry).